Consider the following 369-residue polypeptide: tRNA 2-selenouridine synthase (369 aa).

The region spanning 12–136 (FLDDIPLMDV…LRNFLFETTR (125 aa)) is the Rhodanese domain. The active-site S-selanylcysteine intermediate is the C95.

The protein belongs to the SelU family. As to quaternary structure, monomer.

It catalyses the reaction 5-methylaminomethyl-2-thiouridine(34) in tRNA + selenophosphate + (2E)-geranyl diphosphate + H2O + H(+) = 5-methylaminomethyl-2-selenouridine(34) in tRNA + (2E)-thiogeraniol + phosphate + diphosphate. The enzyme catalyses 5-methylaminomethyl-2-thiouridine(34) in tRNA + (2E)-geranyl diphosphate = 5-methylaminomethyl-S-(2E)-geranyl-thiouridine(34) in tRNA + diphosphate. It carries out the reaction 5-methylaminomethyl-S-(2E)-geranyl-thiouridine(34) in tRNA + selenophosphate + H(+) = 5-methylaminomethyl-2-(Se-phospho)selenouridine(34) in tRNA + (2E)-thiogeraniol. The catalysed reaction is 5-methylaminomethyl-2-(Se-phospho)selenouridine(34) in tRNA + H2O = 5-methylaminomethyl-2-selenouridine(34) in tRNA + phosphate. Its function is as follows. Involved in the post-transcriptional modification of the uridine at the wobble position (U34) of tRNA(Lys), tRNA(Glu) and tRNA(Gln). Catalyzes the conversion of 2-thiouridine (S2U-RNA) to 2-selenouridine (Se2U-RNA). Acts in a two-step process involving geranylation of 2-thiouridine (S2U) to S-geranyl-2-thiouridine (geS2U) and subsequent selenation of the latter derivative to 2-selenouridine (Se2U) in the tRNA chain. The protein is tRNA 2-selenouridine synthase of Pseudomonas aeruginosa (strain ATCC 15692 / DSM 22644 / CIP 104116 / JCM 14847 / LMG 12228 / 1C / PRS 101 / PAO1).